Here is a 1581-residue protein sequence, read N- to C-terminus: ATP-binding cassette sub-family C member 8 (1581 aa).

Residues 1-30 (MPLAFCGSENHSAAYRVDQGVLNNGCFVDA) are Extracellular-facing. A disulfide bridge links C6 with C26. N10 carries N-linked (GlcNAc...) asparagine glycosylation. Residues 31-47 (LNVVPHVFLLFITFPIL) traverse the membrane as a helical segment. The Cytoplasmic portion of the chain corresponds to 48–72 (FIGWGSQSSKVHIHHSTWLHFPGHN). A helical membrane pass occupies residues 73–89 (LRWILTFMLLFVLVCEI). Over 90–106 (AEGILSDGVTESHHLHL) the chain is Extracellular. Residues 107 to 123 (YMPAGMAFMAAVTSVVY) form a helical membrane-spanning segment. Over 124-136 (YHNIETSNFPKLL) the chain is Cytoplasmic. Residues 137-153 (IALLVYWTLAFITKTIK) traverse the membrane as a helical segment. At 154–169 (FVKFLDHAIGFSQLRF) the chain is on the extracellular side. A helical transmembrane segment spans residues 170–186 (CLTGLLVILYGMLLLVE). Residues 187–303 (VNVIRVRRYI…AFGRRLVLSS (117 aa)) are Cytoplasmic-facing. The ABC transmembrane type-1 1 domain occupies 299-602 (LVLSSTFRIL…LSSVVRSTVK (304 aa)). A helical transmembrane segment spans residues 304-319 (TFRILADLLGFAGPLC). Topologically, residues 320-356 (IFGIVDHLGKENDVFQPKTQFLGVYFVSSQEFLANAY) are extracellular. Residues 357 to 372 (VLAVLLFLALLLQRTF) form a helical membrane-spanning segment. The Cytoplasmic portion of the chain corresponds to 373-438 (LQASYYVAIE…MWFFFLCPNL (66 aa)). Residues 439-454 (WAMPVQIIVGVILLYY) form a helical membrane-spanning segment. Over 455–460 (ILGVSA) the chain is Extracellular. A helical transmembrane segment spans residues 461-473 (LIGAAVIILLAPV). The Cytoplasmic portion of the chain corresponds to 474-541 (QYFVATKLSQ…SLRAFAIYTS (68 aa)). The helical transmembrane segment at 542–557 (ISIFMNTAIPIAAVLI) threads the bilayer. Residues 558–576 (TFVGHVSFFKEADFSPSVA) are Extracellular-facing. The helical transmembrane segment at 577–592 (FASLSLFHILVTPLFL) threads the bilayer. Residues 593–1012 (LSSVVRSTVK…YLSSAGILLL (420 aa)) are Cytoplasmic-facing. Residues 679-929 (VQIMGGYFTW…ECQLFEHWKT (251 aa)) form the ABC transporter 1 domain. The ATP site is built by W688, G716, S720, and S721. S720 serves as a coordination point for Mg(2+). Q774 is a Mg(2+) binding site. The span at 935–949 (DQELEKETVTERKAT) shows a compositional bias: basic and acidic residues. The tract at residues 935-987 (DQELEKETVTERKATEPPQGLSRAMSSRDGLLQDEEEEEEEAAESEEDDNLSS) is disordered. Over residues 966 to 984 (LQDEEEEEEEAAESEEDDN) the composition is skewed to acidic residues. One can recognise an ABC transmembrane type-1 2 domain in the interval 1012-1306 (LSLLVFSQLL…MVRNLADMEL (295 aa)). A helical transmembrane segment spans residues 1013 to 1030 (SLLVFSQLLKHMVLVAID). Residues 1031-1066 (YWLAKWTDSALTLTPAARNCSLSQECTLDQTVYAMV) are Extracellular-facing. N-linked (GlcNAc...) asparagine glycosylation is present at N1049. The chain crosses the membrane as a helical span at residues 1067-1083 (FTVLCSLGIVLCLVTSV). The Cytoplasmic portion of the chain corresponds to 1084–1142 (TVEWTGLKVAKRLHRSLLNRIILAPMRFFETTPLGSILNRFSSDCNTIDQHIPSTLECL). The chain crosses the membrane as a helical span at residues 1143-1160 (SRSTLLCVSALAVISYVT). Residue P1161 is a topological domain, extracellular. The chain crosses the membrane as a helical span at residues 1162 to 1174 (VFLVALLPLAIVC). Residues 1175–1248 (YFIQKYFRVA…FLTAANRWLE (74 aa)) are Cytoplasmic-facing. The chain crosses the membrane as a helical span at residues 1249-1264 (VRMEYIGACVVLIAAV). Residues 1265–1280 (TSISNSLHRELSAGLV) lie on the Extracellular side of the membrane. Residues 1281–1296 (GLGLTYALMVSNYLNW) form a helical membrane-spanning segment. Over 1297–1581 (MVRNLADMEL…VFASFVRADK (285 aa)) the chain is Cytoplasmic. Residues 1344–1578 (IQIQNLSVRY…KDSVFASFVR (235 aa)) enclose the ABC transporter 2 domain. The ADP site is built by T1380, G1381, G1383, K1384, S1385, and S1386. An ATP-binding site is contributed by S1482.

It belongs to the ABC transporter superfamily. ABCC family. Conjugate transporter (TC 3.A.1.208) subfamily. In terms of assembly, forms an heterooctamer with KCNJ11; four ABCC8/SUR1 molecules interact with one KCNJ11 homotetramer.

Its subcellular location is the cell membrane. KATP channels are regulated by cytoplasmic ATP/ADP ratios; ATP inhibits the channel by closing the pore, while ADP activates the channel. Activated by phosphatidylinositol 4,5-biphosphate (PtdIns(4,5)P2). In terms of biological role, regulator subunit of pancreatic ATP-sensitive potassium channel (KATP), playing a major role in the regulation of insulin release. In pancreatic cells, it forms KATP channels with KCNJ11; KCNJ11 forms the channel pore while ABCC8 is required for activation and regulation. The chain is ATP-binding cassette sub-family C member 8 (ABCC8) from Homo sapiens (Human).